A 76-amino-acid chain; its full sequence is Acyl carrier protein (76 aa).

A Carrier domain is found at Met1–Ala76. At Ser36 the chain carries O-(pantetheine 4'-phosphoryl)serine.

This sequence belongs to the acyl carrier protein (ACP) family. In terms of processing, 4'-phosphopantetheine is transferred from CoA to a specific serine of apo-ACP by AcpS. This modification is essential for activity because fatty acids are bound in thioester linkage to the sulfhydryl of the prosthetic group.

It is found in the cytoplasm. The protein operates within lipid metabolism; fatty acid biosynthesis. Carrier of the growing fatty acid chain in fatty acid biosynthesis. The polypeptide is Acyl carrier protein (Aliarcobacter butzleri (strain RM4018) (Arcobacter butzleri)).